Consider the following 446-residue polypeptide: Argininosuccinate synthase (446 aa).

Residues 17 to 25 (AFSGGLDTS) and Ala-43 each bind ATP. Tyr-99 is a binding site for L-citrulline. Gly-129 and Thr-131 together coordinate ATP. Residues Thr-131, Asn-135, and Asp-136 each coordinate L-aspartate. Residue Asn-135 coordinates L-citrulline. Asp-136 serves as a coordination point for ATP. L-citrulline-binding residues include Arg-139 and Ser-192. An ATP-binding site is contributed by Asp-194. L-citrulline is bound by residues Thr-201, Glu-203, and Glu-280.

Belongs to the argininosuccinate synthase family. Type 2 subfamily. As to quaternary structure, homotetramer.

The protein resides in the cytoplasm. It catalyses the reaction L-citrulline + L-aspartate + ATP = 2-(N(omega)-L-arginino)succinate + AMP + diphosphate + H(+). The protein operates within amino-acid biosynthesis; L-arginine biosynthesis; L-arginine from L-ornithine and carbamoyl phosphate: step 2/3. The protein is Argininosuccinate synthase of Polaromonas sp. (strain JS666 / ATCC BAA-500).